Consider the following 359-residue polypeptide: tRNA N6-adenosine threonylcarbamoyltransferase (359 aa).

Fe cation contacts are provided by H121 and H125. Residues 143 to 147 (LVSGG), D176, G189, and N286 contribute to the substrate site. Residue D311 coordinates Fe cation.

The protein belongs to the KAE1 / TsaD family. It depends on Fe(2+) as a cofactor.

Its subcellular location is the cytoplasm. It carries out the reaction L-threonylcarbamoyladenylate + adenosine(37) in tRNA = N(6)-L-threonylcarbamoyladenosine(37) in tRNA + AMP + H(+). Functionally, required for the formation of a threonylcarbamoyl group on adenosine at position 37 (t(6)A37) in tRNAs that read codons beginning with adenine. Is involved in the transfer of the threonylcarbamoyl moiety of threonylcarbamoyl-AMP (TC-AMP) to the N6 group of A37, together with TsaE and TsaB. TsaD likely plays a direct catalytic role in this reaction. The sequence is that of tRNA N6-adenosine threonylcarbamoyltransferase from Jannaschia sp. (strain CCS1).